Here is a 357-residue protein sequence, read N- to C-terminus: DNA replication and repair protein RecF (357 aa).

30–37 lines the ATP pocket; it reads GANGSGKT.

Belongs to the RecF family.

It is found in the cytoplasm. Its function is as follows. The RecF protein is involved in DNA metabolism; it is required for DNA replication and normal SOS inducibility. RecF binds preferentially to single-stranded, linear DNA. It also seems to bind ATP. The polypeptide is DNA replication and repair protein RecF (Escherichia fergusonii (strain ATCC 35469 / DSM 13698 / CCUG 18766 / IAM 14443 / JCM 21226 / LMG 7866 / NBRC 102419 / NCTC 12128 / CDC 0568-73)).